We begin with the raw amino-acid sequence, 76 residues long: Large ribosomal subunit protein bL31 (76 aa).

Zn(2+) contacts are provided by C16, C18, C37, and C40.

The protein belongs to the bacterial ribosomal protein bL31 family. Type A subfamily. In terms of assembly, part of the 50S ribosomal subunit. Zn(2+) serves as cofactor.

Binds the 23S rRNA. This Solibacter usitatus (strain Ellin6076) protein is Large ribosomal subunit protein bL31.